The primary structure comprises 149 residues: Low molecular weight protein-tyrosine-phosphatase Wzb (149 aa).

Cysteine 9 serves as the catalytic Nucleophile. Residue arginine 15 is part of the active site. The active-site Proton donor is the aspartate 115.

This sequence belongs to the low molecular weight phosphotyrosine protein phosphatase family.

It catalyses the reaction O-phospho-L-tyrosyl-[protein] + H2O = L-tyrosyl-[protein] + phosphate. It participates in glycan metabolism; exopolysaccharide biosynthesis. Dephosphorylates Wzc. Required for the extracellular polysaccharide colanic acid synthesis. Probably involved in the export of colanic acid from the cell to medium. Involved in protection of cells against contact-dependent growth inhibition (CDI). In Salmonella typhimurium (strain LT2 / SGSC1412 / ATCC 700720), this protein is Low molecular weight protein-tyrosine-phosphatase Wzb (wzb).